The chain runs to 271 residues: tRNA pseudouridine synthase A (271 aa).

Residue D56 is the Nucleophile of the active site. Residue Y120 participates in substrate binding.

The protein belongs to the tRNA pseudouridine synthase TruA family. Homodimer.

The enzyme catalyses uridine(38/39/40) in tRNA = pseudouridine(38/39/40) in tRNA. Formation of pseudouridine at positions 38, 39 and 40 in the anticodon stem and loop of transfer RNAs. The sequence is that of tRNA pseudouridine synthase A from Janthinobacterium sp. (strain Marseille) (Minibacterium massiliensis).